The chain runs to 360 residues: MKKLLALAVIAPLLISCSSSTKKGETYNEAWVKDTNGFDILMGQFANNIENLWGYKEVLIAGPKDYVKYTDQFQTRSHINFDDGTITVETIAGTEPTAHLRRAIIKTLLMGDDPTSVDLYSDVDDIKISKEPFLYGQVLDNTGQPIRWEGRATTFADYLLKTRLKSRSNGLRIIYSVTINLVPNHLDKRAHKYIGMVRQASRKYGVDESLILAIMQTESSFNPYAVSHADALGLMQVVQHSAGKDVFRSQGKSGTPSRNFLFDPASNIDTGTAYLAMLNNVYLSGIENPTSRRYAVITAYNGGAGSVLRIFSNDKIQAANMINRMSPGDVYQILTTRHPSAESRRYLYKVNSAQRSYRRR.

Positions Met1–Ser16 are cleaved as a signal peptide. Residue Cys17 is the site of N-palmitoyl cysteine attachment. Cys17 carries the S-diacylglycerol cysteine lipid modification.

The protein belongs to the transglycosylase Slt family.

The protein localises to the cell outer membrane. It carries out the reaction Exolytic cleavage of the (1-&gt;4)-beta-glycosidic linkage between N-acetylmuramic acid (MurNAc) and N-acetylglucosamine (GlcNAc) residues in peptidoglycan, from either the reducing or the non-reducing ends of the peptidoglycan chains, with concomitant formation of a 1,6-anhydrobond in the MurNAc residue.. Its function is as follows. Murein-degrading enzyme. May play a role in recycling of muropeptides during cell elongation and/or cell division. The polypeptide is Membrane-bound lytic murein transglycosylase C (Salmonella typhi).